A 977-amino-acid chain; its full sequence is Kinesin-like protein KIN-14D (977 aa).

The span at 1-13 (MSSSNNAAAAAAS) shows a compositional bias: low complexity. Positions 1 to 20 (MSSSNNAAAAAASPDPSRRR) are disordered. The region spanning 17–118 (SRRREDVVGW…CILALKDRFG (102 aa)) is the Calponin-homology (CH) domain. A coiled-coil region spans residues 297 to 384 (KAEETQRIED…TKRRIELEEL (88 aa)). Positions 472-800 (NIRVYCRIRP…LKFAERVSGV (329 aa)) constitute a Kinesin motor domain. 556 to 563 (GQTGSGKT) is a binding site for ATP. A coiled-coil region spans residues 812 to 847 (KEGKDVKELMDQLSLLKDTISKKDEEIDRLQLLNSS). A disordered region spans residues 852–977 (PTRQADSVLK…RNNSTLKRGP (126 aa)). 2 stretches are compositionally biased toward polar residues: residues 861 to 879 (KHSS…TSVG) and 956 to 977 (RKSS…KRGP).

This sequence belongs to the TRAFAC class myosin-kinesin ATPase superfamily. Kinesin family. KIN-14 subfamily.

The polypeptide is Kinesin-like protein KIN-14D (Oryza sativa subsp. japonica (Rice)).